Consider the following 338-residue polypeptide: Lipoyl synthase (338 aa).

Residues 1–24 are disordered; sequence MTTVQEAVPNLIPTQDATPRPAPK. Positions 84, 89, 95, 110, 114, 117, and 324 each coordinate [4Fe-4S] cluster. Positions 96 to 313 constitute a Radical SAM core domain; sequence FSGGTATFMI…AEEGYKMGFK (218 aa).

Belongs to the radical SAM superfamily. Lipoyl synthase family. [4Fe-4S] cluster serves as cofactor.

It is found in the cytoplasm. The enzyme catalyses [[Fe-S] cluster scaffold protein carrying a second [4Fe-4S](2+) cluster] + N(6)-octanoyl-L-lysyl-[protein] + 2 oxidized [2Fe-2S]-[ferredoxin] + 2 S-adenosyl-L-methionine + 4 H(+) = [[Fe-S] cluster scaffold protein] + N(6)-[(R)-dihydrolipoyl]-L-lysyl-[protein] + 4 Fe(3+) + 2 hydrogen sulfide + 2 5'-deoxyadenosine + 2 L-methionine + 2 reduced [2Fe-2S]-[ferredoxin]. Its pathway is protein modification; protein lipoylation via endogenous pathway; protein N(6)-(lipoyl)lysine from octanoyl-[acyl-carrier-protein]: step 2/2. Functionally, catalyzes the radical-mediated insertion of two sulfur atoms into the C-6 and C-8 positions of the octanoyl moiety bound to the lipoyl domains of lipoate-dependent enzymes, thereby converting the octanoylated domains into lipoylated derivatives. In Pseudomonas putida (strain ATCC 700007 / DSM 6899 / JCM 31910 / BCRC 17059 / LMG 24140 / F1), this protein is Lipoyl synthase.